The primary structure comprises 700 residues: Sex comb on midleg-like protein 2 (700 aa).

Residues 1 to 33 are disordered; it reads MGQTVNEDSMDVKKENQEKTPQSSTSSVQRDDF. Polar residues predominate over residues 19-28; sequence KTPQSSTSSV. 2 MBT repeats span residues 33-131 and 139-240; these read FHWE…LQPP and SSWP…LQPP. The segment covering 253–281 has biased composition (polar residues); that stretch reads TESSPSEASQHSMQSPQKTTLILPTQQVR. Disordered regions lie at residues 253 to 320 and 466 to 550; these read TESS…EKPL and PFSS…SSLN. Residues serine 256, serine 261, serine 267, serine 299, and serine 300 each carry the phosphoserine modification. Threonine 305 is subject to Phosphothreonine. A compositionally biased stretch (basic and acidic residues) spans 476 to 495; sequence SSAEHDKNQSAKEDVTERQS. The residue at position 499 (serine 499) is a Phosphoserine. Threonine 503 is subject to Phosphothreonine. Serine 511 is subject to Phosphoserine. Lysine 518 participates in a covalent cross-link: Glycyl lysine isopeptide (Lys-Gly) (interchain with G-Cter in SUMO2). The residue at position 522 (serine 522) is a Phosphoserine. Residues 535–545 show a composition bias toward basic and acidic residues; that stretch reads PKEENLSEDSK. Residue lysine 536 forms a Glycyl lysine isopeptide (Lys-Gly) (interchain with G-Cter in SUMO2) linkage. Phosphoserine occurs at positions 570, 583, 590, and 594. Residues 575–584 show a composition bias toward polar residues; sequence RSVPGTTSSP. Residues 575 to 594 form a disordered region; sequence RSVPGTTSSPLVGDISPKSS. Glycyl lysine isopeptide (Lys-Gly) (interchain with G-Cter in SUMO2) cross-links involve residues lysine 599 and lysine 605. In terms of domain architecture, SAM spans 631 to 700; it reads WSVDEVIQFM…IEKLKEGKYS (70 aa).

This sequence belongs to the SCM family. Highly expressed in placenta, thymus and testis. Detected at lower levels in brain, liver, skeletal muscle, pancreas and ovary.

The protein resides in the nucleus. Functionally, putative Polycomb group (PcG) protein. PcG proteins act by forming multiprotein complexes, which are required to maintain the transcriptionally repressive state of homeotic genes throughout development. The chain is Sex comb on midleg-like protein 2 (SCML2) from Homo sapiens (Human).